The sequence spans 503 residues: Legumin J (503 aa).

The N-terminal stretch at 1–22 (MSKPFLSLLSLSLLLFASACLA) is a signal peptide. 2 disulfides stabilise this stretch: Cys-33–Cys-66 and Cys-109–Cys-329. The 220-residue stretch at 38-257 (INALEPDHRV…TFNTEEDTAK (220 aa)) folds into the Cupin type-1 1 domain. 3 disordered regions span residues 111-140 (ETYEEPRSSQSRQESRQQQGDSHQKVRRFR), 185-235 (FYLG…EGNS), and 253-323 (EDTA…RKNG). Residues 118–129 (SSQSRQESRQQQ) show a composition bias toward low complexity. 2 stretches are compositionally biased toward basic and acidic residues: residues 254-268 (DTAKRLRSPRDERSQ) and 282-300 (KGKEEEEKEQSHSHSHREE). Residues 301–312 (KEEEEEEEEDEE) show a composition bias toward acidic residues. The span at 313–323 (EKQRSEERKNG) shows a compositional bias: basic and acidic residues. The Cupin type-1 2 domain occupies 335-482 (ENIADAARAD…AFGLRQRQVT (148 aa)).

The protein belongs to the 11S seed storage protein (globulins) family. Hexamer; each subunit is composed of an acidic and a basic chain derived from a single precursor and linked by a disulfide bond.

Functionally, this protein found in the seeds of many leguminous and non-leguminous plants is the source of sulfur-containing amino acids in seed meals. This is Legumin J (LEGJ) from Pisum sativum (Garden pea).